Reading from the N-terminus, the 298-residue chain is MHALMRLFSDYTLQNVVLGTLFLGLGSGLVGSFAVLRRQSLFGDAVSHATLPGIVIAFLLTGTKSTEILLLGAALSGLVGTVVMLMVMRTTKIDTDGAQGIVLGVFLGFGFLLLTHVQKSPQAAKAGLNKFILGQAATILQRDVLLIIAMEVVIGLLVLLFWKELKLSTFDRDFSAVQGFSPQLMEFMLTALIVVAVVVGVQAVGVILMSALLTAPAVAARQWTNSLRVLCALAALFGGVSGVSGSVVSAQVPRLSTGPVIVLVLTGIALVSIMLGPQRGVLYQLWRRRRVSLLQEEG.

A run of 8 helical transmembrane segments spans residues 16-36, 41-61, 68-88, 97-117, 144-164, 187-207, 229-249, and 255-275; these read VVLGTLFLGLGSGLVGSFAVL, LFGDAVSHATLPGIVIAFLLT, ILLLGAALSGLVGTVVMLMVM, GAQGIVLGVFLGFGFLLLTHV, VLLIIAMEVVIGLLVLLFWKE, FMLTALIVVAVVVGVQAVGVI, VLCALAALFGGVSGVSGSVVS, and LSTGPVIVLVLTGIALVSIML.

Belongs to the ABC-3 integral membrane protein family.

Its subcellular location is the cell membrane. In terms of biological role, part of an ATP-driven transport system TroABCD for zinc. This is Zinc transport system membrane protein TroC (troC) from Treponema pallidum (strain Nichols).